The following is a 280-amino-acid chain: 2,3,4,5-tetrahydropyridine-2,6-dicarboxylate N-succinyltransferase (280 aa).

Belongs to the transferase hexapeptide repeat family.

Its subcellular location is the cytoplasm. The enzyme catalyses (S)-2,3,4,5-tetrahydrodipicolinate + succinyl-CoA + H2O = (S)-2-succinylamino-6-oxoheptanedioate + CoA. It participates in amino-acid biosynthesis; L-lysine biosynthesis via DAP pathway; LL-2,6-diaminopimelate from (S)-tetrahydrodipicolinate (succinylase route): step 1/3. This is 2,3,4,5-tetrahydropyridine-2,6-dicarboxylate N-succinyltransferase from Methylorubrum populi (strain ATCC BAA-705 / NCIMB 13946 / BJ001) (Methylobacterium populi).